We begin with the raw amino-acid sequence, 814 residues long: Lon protease (814 aa).

The tract at residues 1–20 (MANEAHNIEHTDPEFRDDSA) is disordered. In terms of domain architecture, Lon N-terminal spans 25 to 219 (LPLLPVRDTV…KINQHLAKEL (195 aa)). 372–379 (GPPGVGKT) is an ATP binding site. Residues 610 to 792 (TKRAGVVVGL…DEVLEIALPS (183 aa)) form the Lon proteolytic domain. Active-site residues include serine 697 and lysine 740.

Belongs to the peptidase S16 family. As to quaternary structure, homohexamer. Organized in a ring with a central cavity.

The protein localises to the cytoplasm. The enzyme catalyses Hydrolysis of proteins in presence of ATP.. Functionally, ATP-dependent serine protease that mediates the selective degradation of mutant and abnormal proteins as well as certain short-lived regulatory proteins. Required for cellular homeostasis and for survival from DNA damage and developmental changes induced by stress. Degrades polypeptides processively to yield small peptide fragments that are 5 to 10 amino acids long. Binds to DNA in a double-stranded, site-specific manner. The protein is Lon protease of Koribacter versatilis (strain Ellin345).